Consider the following 208-residue polypeptide: Small ribosomal subunit protein uS4 (208 aa).

The interval 28–48 is disordered; sequence YFEKRPYPPGEHGRARRRTES. The S4 RNA-binding domain maps to 95–159; the sequence is MRLDALVLRS…ARTPFQVAAA (65 aa).

Belongs to the universal ribosomal protein uS4 family. In terms of assembly, part of the 30S ribosomal subunit. Contacts protein S5. The interaction surface between S4 and S5 is involved in control of translational fidelity.

In terms of biological role, one of the primary rRNA binding proteins, it binds directly to 16S rRNA where it nucleates assembly of the body of the 30S subunit. Functionally, with S5 and S12 plays an important role in translational accuracy. This chain is Small ribosomal subunit protein uS4, found in Beutenbergia cavernae (strain ATCC BAA-8 / DSM 12333 / CCUG 43141 / JCM 11478 / NBRC 16432 / NCIMB 13614 / HKI 0122).